The sequence spans 770 residues: Probable zinc transporter protein DDB_G0291141 (770 aa).

The Cytoplasmic segment spans residues 1–36 (MAGSLDDSIYNNGRSGGGGGGFKFSKGFNKDSISKR). The helical transmembrane segment at 37–57 (IIMMLFFSKGIRAWSCIILLY) threads the bilayer. Residues 58-62 (FLQSS) lie on the Extracellular side of the membrane. Residues 63 to 83 (ISIISASFYMCLFSAIFSVVV) form a helical membrane-spanning segment. Topologically, residues 84–100 (EKPWNLLSSLRPSQIKK) are cytoplasmic. A helical membrane pass occupies residues 101-117 (IIYHSIFNLLIIITWNS). At 118-123 (SIKFIG) the chain is on the extracellular side. A helical transmembrane segment spans residues 124-146 (PIGSILASDYTFSTYPLIFNSLL). The Cytoplasmic portion of the chain corresponds to 147–154 (QGNFLATD). Residues 155–175 (MSRGSIMLMIGYFLIPLFGIS) form a helical membrane-spanning segment. Topologically, residues 176-184 (NRLDILGYT) are extracellular. A helical transmembrane segment spans residues 185–205 (SSQVFMIGLFSLIVHNVLVLW). Over 206–224 (KKTIVRSWNSGSSGGKNKL) the chain is Cytoplasmic. A helical membrane pass occupies residues 225–245 (SSLGSCVSTIILFVFKLFEGF). Topologically, residues 246-262 (SSGSSGSDSINQVSYSQ) are extracellular. The chain crosses the membrane as a helical span at residues 263-283 (LFVIAIITFILYSLNQFIDDV). The Cytoplasmic portion of the chain corresponds to 284 to 291 (SEKELTFN). The helical transmembrane segment at 292–312 (VLSKVSLTSSVIFGLLAALFI) threads the bilayer. The Extracellular portion of the chain corresponds to 313 to 316 (GFKD). A helical membrane pass occupies residues 317 to 337 (FFHPILILSFIFIINAIHILY). Over 338–404 (SKSNDIQPMT…QIVDKPTSRR (67 aa)) the chain is Cytoplasmic. A helical transmembrane segment spans residues 405 to 425 (IFTFLVINLMFMFVEMAYGIW). The Extracellular portion of the chain corresponds to 426–434 (TNSLGLITD). A helical membrane pass occupies residues 435 to 455 (ACHMFFDATALFIALVAEVIS). Topologically, residues 456–469 (QWKQNDKYSYGYGR) are cytoplasmic. Residues 470–490 (FQVLSGFVNGIFLIFIAVTIL) traverse the membrane as a helical segment. Topologically, residues 491–507 (MESVERLLEPPEINTDK) are extracellular. A helical membrane pass occupies residues 508 to 528 (LLLVSVLGFIINLIGIFSFHG). Over 529–592 (DHGHSHGGGG…GVFLHLLADT (64 aa)) the chain is Cytoplasmic. A disordered region spans residues 532 to 566 (HSHGGGGGHSHGGGEKKEKHHGHSHGGHGDHQQVT). Residues 593 to 613 (LGSVGVIVSSLIIQIWGYTLA) form a helical membrane-spanning segment. A topological domain (extracellular) is located at residue Asp614. Residues 615-635 (PICSLLISILIFLSVLPLIAN) traverse the membrane as a helical segment. Residues 636–770 (TAKTLLQCTP…SSSSHHHRHN (135 aa)) are Cytoplasmic-facing. The tract at residues 751-770 (DIHHNHSSSSSSSSHHHRHN) is disordered.

Belongs to the cation diffusion facilitator (CDF) transporter (TC 2.A.4) family. SLC30A subfamily.

It is found in the membrane. In terms of biological role, may be involved in zinc transport from the cytoplasm to either intracellular organelles or extracellular spaces. The protein is Probable zinc transporter protein DDB_G0291141 of Dictyostelium discoideum (Social amoeba).